The following is a 149-amino-acid chain: SsrA-binding protein (149 aa).

The tract at residues 121–149 (GKKQHDKRAAEKDREWQREKQRLVRSAQH) is disordered. Residues 127–142 (KRAAEKDREWQREKQR) are compositionally biased toward basic and acidic residues.

The protein belongs to the SmpB family.

Its subcellular location is the cytoplasm. Required for rescue of stalled ribosomes mediated by trans-translation. Binds to transfer-messenger RNA (tmRNA), required for stable association of tmRNA with ribosomes. tmRNA and SmpB together mimic tRNA shape, replacing the anticodon stem-loop with SmpB. tmRNA is encoded by the ssrA gene; the 2 termini fold to resemble tRNA(Ala) and it encodes a 'tag peptide', a short internal open reading frame. During trans-translation Ala-aminoacylated tmRNA acts like a tRNA, entering the A-site of stalled ribosomes, displacing the stalled mRNA. The ribosome then switches to translate the ORF on the tmRNA; the nascent peptide is terminated with the 'tag peptide' encoded by the tmRNA and targeted for degradation. The ribosome is freed to recommence translation, which seems to be the essential function of trans-translation. In Thiobacillus denitrificans (strain ATCC 25259 / T1), this protein is SsrA-binding protein.